The sequence spans 60 residues: UPF0291 protein CTC_01690.1 (60 aa).

The protein belongs to the UPF0291 family.

It localises to the cytoplasm. This chain is UPF0291 protein CTC_01690.1, found in Clostridium tetani (strain Massachusetts / E88).